The primary structure comprises 331 residues: Cytochrome bo(3) ubiquinol oxidase subunit 2 (331 aa).

Residues M1–G23 form the signal peptide. C24 carries the N-palmitoyl cysteine lipid modification. A lipid anchor (S-diacylglycerol cysteine) is attached at C24. Residues C24 to T41 are Periplasmic-facing. Residues L42 to L62 form a helical membrane-spanning segment. Residues A63–R86 lie on the Cytoplasmic side of the membrane. Residues I87–W107 form a helical membrane-spanning segment. Over E108 to E331 the chain is Periplasmic.

It belongs to the cytochrome c oxidase subunit 2 family. In terms of assembly, heterooctamer of two A chains, two B chains, two C chains and two D chains.

The protein resides in the cell inner membrane. In terms of biological role, cytochrome bo(3) ubiquinol terminal oxidase is the component of the aerobic respiratory chain of E.coli that predominates when cells are grown at high aeration. Has proton pump activity across the membrane in addition to electron transfer, pumping 2 protons/electron. This is Cytochrome bo(3) ubiquinol oxidase subunit 2 (cyoA) from Pseudomonas aeruginosa (strain ATCC 15692 / DSM 22644 / CIP 104116 / JCM 14847 / LMG 12228 / 1C / PRS 101 / PAO1).